Consider the following 638-residue polypeptide: MSKQEEISKYGAKNIQFLEGLEAVRKRPGMYIGSIGFRGLHHLIWEIVDNSVDEAMAGFATNIEVKLHPNNEIEVIDNGRGMPVDIHPTTKKSAVETILTVLYAGGKFDSTNYKVSGGLHGVGVSVVNALSDSFEVWVKRGGKFYYQKYINGGHPVKPLEVIGEVNKDETGTRIKFHPDYQIMDKVAFDFGTIIDHAKQIAYLNKGLSISCEDITKNTIRNFCFEGGIIDYVSELNRGKKVIIPDIIYAEGTFRDKTPNAQDVIVNVAIQYNETYTSNIVSYANNIQTGEGGTHEQGFYDALTRIYNKYAEDNKLFKNNNEKISREDTKDGLVAIISIKHTDPIFEGQTKGKLENKDARIATNKIISEQLERYMAENPSHAKAIIEKCLLTQRSRLAANAAREASRKKEGSEFGNLPGKLADCSSKNAEVRELFIVEGNSAGGSAKMGRDRATQAILPLRGKIINAEKQDFTSVMSNKEVSSMIHALGTGITDEFNINKLKYHKIVIMTDADVDGAHIATLLLTFFYRYMRPLIEYGFVYIAQPPLYKISTAKVTEYAYNDAQKEEILSKLEDSKNISIQRYKGLGEMDPEQLWETTMNPATRKYCKFKSMTLLAAIQSFQHWWVKKLNLVMTSFKKC.

The 115-residue stretch at 431–545 (RELFIVEGNS…YGFVYIAQPP (115 aa)) folds into the Toprim domain. 3 residues coordinate Mg(2+): Glu437, Asp510, and Asp512.

This sequence belongs to the type II topoisomerase GyrB family. In terms of assembly, heterotetramer, composed of two GyrA and two GyrB chains. In the heterotetramer, GyrA contains the active site tyrosine that forms a transient covalent intermediate with DNA, while GyrB binds cofactors and catalyzes ATP hydrolysis. It depends on Mg(2+) as a cofactor. The cofactor is Mn(2+). Ca(2+) serves as cofactor.

Its subcellular location is the cytoplasm. It catalyses the reaction ATP-dependent breakage, passage and rejoining of double-stranded DNA.. Functionally, a type II topoisomerase that negatively supercoils closed circular double-stranded (ds) DNA in an ATP-dependent manner to modulate DNA topology and maintain chromosomes in an underwound state. Negative supercoiling favors strand separation, and DNA replication, transcription, recombination and repair, all of which involve strand separation. Also able to catalyze the interconversion of other topological isomers of dsDNA rings, including catenanes and knotted rings. Type II topoisomerases break and join 2 DNA strands simultaneously in an ATP-dependent manner. The sequence is that of DNA gyrase subunit B from Metamycoplasma arthritidis (Mycoplasma arthritidis).